Reading from the N-terminus, the 250-residue chain is uncharacterized protein (250 aa).

Positions 1 to 24 (MKGFLKPNFSLGALFLTLSPIATA) are cleaved as a signal peptide. Cys25 carries N-palmitoyl cysteine lipidation. Cys25 is lipidated: S-diacylglycerol cysteine. In terms of domain architecture, TNase-like spans 44 to 200 (RLRKARVNHW…FNNRKNIFSY (157 aa)).

It localises to the cell membrane. This is an uncharacterized protein from Mycoplasma genitalium (strain ATCC 33530 / DSM 19775 / NCTC 10195 / G37) (Mycoplasmoides genitalium).